The following is a 280-amino-acid chain: Borealin (280 aa).

The required for interaction with INCENP stretch occupies residues 1–58 (MAPRKGSSRVAKTNSLRRRKLASFLKDFDREVEIRIKQIESDRQNLLKEVDNLYNIEI). The segment at 1-88 (MAPRKGSSRV…NKQALEEAAT (88 aa)) is required for centromere localization. The required for interaction with SENP3 stretch occupies residues 1 to 140 (MAPRKGSSRV…ENERKNLQTA (140 aa)). The interval 10–109 (VAKTNSLRRR…TAEAIQTPLK (100 aa)) is required to form a minimal CPC core complex that localizes to the central spindle and midbody and properly executes the role of the CPC during cytokinesis. Positions 20-78 (KLASFLKDFDREVEIRIKQIESDRQNLLKEVDNLYNIEILRLPKALREMNWLDYFALGG) are required for interaction with INCENP and BIRC5. A phosphothreonine; by TTK mark is found at T88 and T94. Residue T106 is modified to Phosphothreonine. Phosphoserine is present on S110. A disordered region spans residues 130–169 (EENERKNLQTARVKRCPPSKKRTQSIQGKGKGKRSSRANT). A Glycyl lysine isopeptide (Lys-Gly) (interchain with G-Cter in SUMO2) cross-link involves residue K135. The span at 141–152 (RVKRCPPSKKRT) shows a compositional bias: basic residues. At S165 the chain carries Phosphoserine; by AURKB. T169 carries the post-translational modification Phosphothreonine; by TTK. T189 and T204 each carry phosphothreonine. Phosphoserine is present on residues S219 and S224. Phosphothreonine; by TTK is present on T230. Residues S238 and S244 each carry the phosphoserine modification.

It belongs to the borealin family. May form homooligomers and homodimers. Component of the chromosomal passenger complex (CPC) composed of at least BIRC5/survivin, CDCA8/borealin, INCENP, AURKB or AURKC; in the complex forms a triple-helix bundle-based subcomplex with INCENP and BIRC5. Interacts with SENP3, UBE2I and RANBP2. Interacts (phosphorylated) with SGO1 and SGO2; the association is dependent on CDK1. In terms of processing, phosphorylated by TTK, essentially at Thr-88, Thr94, Thr-169 and Thr-230. Phosphorylation (probably by CDK1) promotes targeting of the CPC to centromeric DNA. Post-translationally, sumoylated by UBE2I and RANBP2. Desumoylated by SENP3 through the removal of SUMO2 and SUMO3.

The protein localises to the nucleus. It is found in the nucleolus. Its subcellular location is the cytoplasm. It localises to the chromosome. The protein resides in the centromere. The protein localises to the cytoskeleton. It is found in the spindle. Functionally, component of the chromosomal passenger complex (CPC), a complex that acts as a key regulator of mitosis. The CPC complex has essential functions at the centromere in ensuring correct chromosome alignment and segregation and is required for chromatin-induced microtubule stabilization and spindle assembly. In the complex, it may be required to direct the CPC to centromeric DNA. The sequence is that of Borealin (CDCA8) from Pongo abelii (Sumatran orangutan).